The following is a 2763-amino-acid chain: Large tegument protein deneddylase (2763 aa).

The tract at residues 1–247 (MDIIPPIAVT…CDTYFTDEQY (247 aa)) is deubiquitination activity. One can recognise a Peptidase C76 domain in the interval 12-237 (AGVGSRNQFD…SSAVTLIYGS (226 aa)). Catalysis depends on residues C32, D168, and H170. The interaction with inner tegument protein stretch occupies residues 495–523 (LELFINLTILRLTGFVVENGTRTHHGATS). Repeat copies occupy residues 2455–2457 (PVQ), 2458–2460 (PVQ), 2461–2463 (PAQ), 2464–2466 (PVQ), 2467–2469 (PAQ), 2470–2472 (PAQ), 2473–2475 (PVQ), and 2476–2478 (PAQ). An 8 X 3 AA repeats of P-A/V-Q region spans residues 2455 to 2478 (PVQPVQPAQPVQPAQPAQPVQPAQ). The disordered stretch occupies residues 2630–2651 (NYKTRQPSPNFPRDVHTWGVSS).

Belongs to the herpesviridae large tegument protein family. Interacts with host CUL1 and CUL4A; these interactions inhibit the E3 ligase activity of cullins. Interacts with inner tegument protein. Interacts with capsid vertex specific component CVC2. Interacts with the major capsid protein/MCP.

It localises to the virion tegument. The protein resides in the host cytoplasm. It is found in the host nucleus. The enzyme catalyses Thiol-dependent hydrolysis of ester, thioester, amide, peptide and isopeptide bonds formed by the C-terminal Gly of ubiquitin (a 76-residue protein attached to proteins as an intracellular targeting signal).. Its function is as follows. Large tegument protein that plays multiple roles in the viral cycle. During viral entry, remains associated with the capsid while most of the tegument is detached and participates in the capsid transport toward the host nucleus. Plays a role in the routing of the capsid at the nuclear pore complex and subsequent uncoating. Within the host nucleus, acts as a deneddylase and promotes the degradation of nuclear CRLs (cullin-RING ubiquitin ligases) and thereby stabilizes nuclear CRL substrates, while cytoplasmic CRLs remain unaffected. These modifications prevent host cell cycle S-phase progression and create a favorable environment allowing efficient viral genome replication. Participates later in the secondary envelopment of capsids. Indeed, plays a linker role for the association of the outer viral tegument to the capsids together with the inner tegument protein. The protein is Large tegument protein deneddylase of Varicella-zoster virus (strain Oka vaccine) (HHV-3).